The following is a 525-amino-acid chain: GMP synthase [glutamine-hydrolyzing] (525 aa).

The Glutamine amidotransferase type-1 domain maps to 9 to 207 (RILILDFGSQ…VRDICQCEAL (199 aa)). Catalysis depends on cysteine 86, which acts as the Nucleophile. Catalysis depends on residues histidine 181 and glutamate 183. One can recognise a GMPS ATP-PPase domain in the interval 208–400 (WTPAKIIDDA…LGLPYDMLYR (193 aa)). ATP is bound at residue 235–241 (SGGVDSS).

Homodimer.

It catalyses the reaction XMP + L-glutamine + ATP + H2O = GMP + L-glutamate + AMP + diphosphate + 2 H(+). It participates in purine metabolism; GMP biosynthesis; GMP from XMP (L-Gln route): step 1/1. Its function is as follows. Catalyzes the synthesis of GMP from XMP. This is GMP synthase [glutamine-hydrolyzing] from Escherichia coli O127:H6 (strain E2348/69 / EPEC).